Here is a 1171-residue protein sequence, read N- to C-terminus: Kinesin-like protein GA13060 (1171 aa).

Residues 1–24 are disordered; it reads MASSISRNGGFCGALQRAPPPMPP. A Kinesin motor domain is found at 40–400; that stretch reads KVKVMLRVSD…IQIASRIHRL (361 aa). Disordered regions lie at residues 737-774, 798-820, 932-955, 1043-1099, and 1124-1143; these read LLGQ…GSRD, LVAS…SQRS, PAYR…SLPS, TSSE…QRHR, and RHSH…EGNG. The segment covering 805 to 816 has biased composition (basic residues); sequence SSHHQHQHHRPS. A compositionally biased stretch (polar residues) spans 1043–1059; sequence TSSEAYDSGHDSNSTPR. The span at 1124–1139 shows a compositional bias: basic residues; sequence RHSHGVGGHKKHRHRH.

It belongs to the TRAFAC class myosin-kinesin ATPase superfamily. Kinesin family. KIF26 subfamily.

Its subcellular location is the cytoplasm. The protein localises to the cytoskeleton. The polypeptide is Kinesin-like protein GA13060 (Drosophila pseudoobscura pseudoobscura (Fruit fly)).